The following is a 291-amino-acid chain: Ribosomal RNA small subunit methyltransferase A (291 aa).

6 residues coordinate S-adenosyl-L-methionine: N33, V35, G60, E81, D111, and N129.

Belongs to the class I-like SAM-binding methyltransferase superfamily. rRNA adenine N(6)-methyltransferase family. RsmA subfamily.

It is found in the cytoplasm. The catalysed reaction is adenosine(1518)/adenosine(1519) in 16S rRNA + 4 S-adenosyl-L-methionine = N(6)-dimethyladenosine(1518)/N(6)-dimethyladenosine(1519) in 16S rRNA + 4 S-adenosyl-L-homocysteine + 4 H(+). In terms of biological role, specifically dimethylates two adjacent adenosines (A1518 and A1519) in the loop of a conserved hairpin near the 3'-end of 16S rRNA in the 30S particle. May play a critical role in biogenesis of 30S subunits. This Streptomyces griseus subsp. griseus (strain JCM 4626 / CBS 651.72 / NBRC 13350 / KCC S-0626 / ISP 5235) protein is Ribosomal RNA small subunit methyltransferase A.